The sequence spans 166 residues: Phosphopantetheine adenylyltransferase (166 aa).

Ser11 contacts substrate. ATP is bound by residues 11 to 12 (SF) and His19. Positions 43, 76, and 90 each coordinate substrate. ATP contacts are provided by residues 91-93 (GLR), Glu101, and 126-132 (LQPVSSS).

Belongs to the bacterial CoaD family. As to quaternary structure, homohexamer. The cofactor is Mg(2+).

The protein resides in the cytoplasm. It catalyses the reaction (R)-4'-phosphopantetheine + ATP + H(+) = 3'-dephospho-CoA + diphosphate. Its pathway is cofactor biosynthesis; coenzyme A biosynthesis; CoA from (R)-pantothenate: step 4/5. Its function is as follows. Reversibly transfers an adenylyl group from ATP to 4'-phosphopantetheine, yielding dephospho-CoA (dPCoA) and pyrophosphate. The protein is Phosphopantetheine adenylyltransferase of Streptococcus equi subsp. equi (strain 4047).